Consider the following 425-residue polypeptide: 3-deoxy-D-manno-octulosonic acid transferase (425 aa).

The helical; Signal-anchor transmembrane segment at 3-23 (ELLYTALLYLIQPLIWIRLWV) threads the bilayer. The active-site Proton acceptor is the E60. CMP is bound by residues 268–269 (PR), 309–311 (MGE), and 335–338 (NPLE).

Belongs to the glycosyltransferase group 1 family. Glycosyltransferase 30 subfamily.

Its subcellular location is the cell inner membrane. It catalyses the reaction lipid IVA (E. coli) + CMP-3-deoxy-beta-D-manno-octulosonate = alpha-Kdo-(2-&gt;6)-lipid IVA (E. coli) + CMP + H(+). It carries out the reaction alpha-Kdo-(2-&gt;6)-lipid IVA (E. coli) + CMP-3-deoxy-beta-D-manno-octulosonate = alpha-Kdo-(2-&gt;4)-alpha-Kdo-(2-&gt;6)-lipid IVA (E. coli) + CMP + H(+). Its pathway is glycolipid biosynthesis; KDO(2)-lipid A biosynthesis; KDO(2)-lipid A from CMP-3-deoxy-D-manno-octulosonate and lipid IV(A): step 1/4. The protein operates within glycolipid biosynthesis; KDO(2)-lipid A biosynthesis; KDO(2)-lipid A from CMP-3-deoxy-D-manno-octulosonate and lipid IV(A): step 2/4. It functions in the pathway bacterial outer membrane biogenesis; LPS core biosynthesis. Functionally, involved in lipopolysaccharide (LPS) biosynthesis. Catalyzes the transfer of two 3-deoxy-D-manno-octulosonate (Kdo) residues from CMP-Kdo to lipid IV(A), the tetraacyldisaccharide-1,4'-bisphosphate precursor of lipid A. The chain is 3-deoxy-D-manno-octulosonic acid transferase (waaA) from Escherichia coli O157:H7.